The chain runs to 566 residues: MNISSQNVLLPSPIPSSSPMASHKKSWLSKHPNQSMTFEKPQLGQFVLTPEPSSNTFYAPSSPASAVRREPLSPMSFVRMRSHRVNKIGRSSQQCDHVLSTVDKAISRVHAIVTCTQDRMIIECVGWNGMIVSDKMRKSVFHMKKNDRIVLVRPNSDACPVLDVFGYRVLLGWPSDSEDEWEGNLNAKNYEENREPMSPSPQEALPLMPSSPPSQDYQNDQNHLILYTNSESIPKLNLRSNELVYPPPSKDLLQKLLALEKDGQVEKSDCSKNTQLKPSFLPKNTDDLLNGTDDNNIVLREVKVSFENEKIESDDLDKNEEISEGEEYTPIEESKEPITVRRDSVIQIDESSAGLTDVISELNFTNHNDDSKNSNITTSNDSPVNEVEPMAPELSSAVVEKKEPEDYESISAVDENTNDSNESLPSSHDYSESTKENSAPDSLLLGLVLDELVFSTTSTTPLPALSHLFPSNMPLQLIQDKLRDLAAKHPYFEEVKRYGTDANGDPLWSEWFYNPDVDDDLERRMRYAPLMRPVRSSRRVHKQYYWKKPRARPRSSGHSSRRRRLS.

A disordered region spans residues 1-32; the sequence is MNISSQNVLLPSPIPSSSPMASHKKSWLSKHP. Residue S73 is modified to Phosphoserine. Residues 86 to 137 form the FHA domain; sequence NKIGRSSQQCDHVLSTVDKAISRVHAIVTCTQDRMIIECVGWNGMIVSDKMR. Disordered stretches follow at residues 191-217, 269-291, 312-334, and 364-437; these read EENREPMSPSPQEALPLMPSSPPSQDY, DCSKNTQLKPSFLPKNTDDLLNG, ESDDLDKNEEISEGEEYTPIEES, and FTNH…TKEN. The span at 314–330 shows a compositional bias: acidic residues; that stretch reads DDLDKNEEISEGEEYTP. Polar residues-rich tracts occupy residues 373–383 and 414–428; these read NSNITTSNDSP and DENTNDSNESLPSSH. S379 and S382 each carry phosphoserine.

The protein belongs to the PLM2/TOS4 family.

The protein resides in the nucleus. Its function is as follows. Probable transcriptional regulatory protein Required for G1/S progression. The protein is Transcription factor P14E8.02 of Schizosaccharomyces pombe (strain 972 / ATCC 24843) (Fission yeast).